Reading from the N-terminus, the 321-residue chain is Cysteine and histidine-rich domain-containing protein 1 (321 aa).

Residues C9, C14, C28, H31, C46, C47, C63, H68, C152, C157, C170, H173, C188, C189, C205, and H210 each coordinate Zn(2+). CHORD domains lie at 9–68 and 152–210; these read CYHK…RGKH and CRNN…SGEH. The CS domain maps to 218–308; it reads VSKFREDWFS…KHGTGWPRLK (91 aa).

Functionally, regulates centrosome duplication. Controls the secretion of the tyrosine kinase receptor let-23/EGFR from the endoplasmic reticulum and is required for the localization of let-23/EGFR to the plasma membrane of vulval precursor cells. It thus plays a role in positively regulating let/EGFR signaling, and anchor cell and vulval precursor cell alignment. Plays a role in vulval development and morphogenesis. The chain is Cysteine and histidine-rich domain-containing protein 1 from Caenorhabditis elegans.